A 433-amino-acid polypeptide reads, in one-letter code: Zuotin (433 aa).

S50 bears the Phosphoserine mark. The J domain maps to 98–170 (LYAAMGLSKL…RAQYDSCDFV (73 aa)). A compositionally biased stretch (basic and acidic residues) spans 292-330 (EEKKEKERRKWEREAGARAEAEAKAKAEAEAKAKAESEA). The segment at 292 to 357 (EEKKEKERRK…KAAKKKNKRA (66 aa)) is disordered.

In terms of assembly, RAC is a heterodimer of the Hsp70/DnaK-type chaperone SSZ1 and the Hsp40/DnaJ-type chaperone ZUO1. RAC associates with ribosomes via ZUO1.

It is found in the cytoplasm. Functionally, component of the ribosome-associated complex (RAC), a heterodimeric chaperone complex involved in regulation of accurate translation termination and in folding or maintaining nascent polypeptides in a folding-competent state. RAC stimulates the ATPase activity of the ribosome-associated pool of Hsp70-type chaperones SSB1/SSB2 that bind to the nascent polypeptide chain. ZUO1 can act as a J-protein for SSB1/SSB2 only when associated with SSZ1. The chain is Zuotin (ZUO1) from Saccharomyces cerevisiae (strain ATCC 204508 / S288c) (Baker's yeast).